Reading from the N-terminus, the 349-residue chain is Biotin synthase (349 aa).

Positions 1–11 (MLEGIEREAAE) are enriched in basic and acidic residues. The segment at 1–30 (MLEGIEREAAEHSNGCSGPAGHAPPAGAPR) is disordered. In terms of domain architecture, Radical SAM core spans 64 to 283 (HEVQLCTLLS…IAVARVMMPR (220 aa)). 3 residues coordinate [4Fe-4S] cluster: Cys-79, Cys-83, and Cys-86. Residues Cys-123, Cys-155, Cys-215, and Arg-287 each coordinate [2Fe-2S] cluster.

This sequence belongs to the radical SAM superfamily. Biotin synthase family. In terms of assembly, homodimer. Requires [4Fe-4S] cluster as cofactor. It depends on [2Fe-2S] cluster as a cofactor.

The catalysed reaction is (4R,5S)-dethiobiotin + (sulfur carrier)-SH + 2 reduced [2Fe-2S]-[ferredoxin] + 2 S-adenosyl-L-methionine = (sulfur carrier)-H + biotin + 2 5'-deoxyadenosine + 2 L-methionine + 2 oxidized [2Fe-2S]-[ferredoxin]. It participates in cofactor biosynthesis; biotin biosynthesis; biotin from 7,8-diaminononanoate: step 2/2. Functionally, catalyzes the conversion of dethiobiotin (DTB) to biotin by the insertion of a sulfur atom into dethiobiotin via a radical-based mechanism. The sequence is that of Biotin synthase from Sorangium cellulosum (strain So ce56) (Polyangium cellulosum (strain So ce56)).